The sequence spans 689 residues: Protein asunder (689 aa).

A coiled-coil region spans residues 521–550 (NGARLKLSKAKDQYRLLYRELEQLIQLNAT). Disordered stretches follow at residues 592–619 (PERL…SKRR) and 665–689 (GTKD…SVRS). The span at 599 to 614 (SSVGASGSSSSNSLLK) shows a compositional bias: low complexity. A Nuclear localization signal (NLS) motif is present at residues 613–619 (LKASKRR).

It belongs to the Integrator subunit 13 family. In terms of assembly, belongs to the multiprotein complex Integrator, at least composed of IntS1, IntS2, IntS3, IntS4, omd/IntS5, IntS6, defl/IntS7, IntS8, IntS9, IntS10, IntS11, IntS12, asun/IntS13, IntS14 and IntS15. The core complex associates with protein phosphatase 2A subunits mts/PP2A and Pp2A-29B, to form the Integrator-PP2A (INTAC) complex. In terms of processing, phosphorylated. Expressed in nurse cells at stages 9-10 of oogenesis and exported to the oocyte. Also expressed in the follicle cells surrounding the oocyte.

The protein localises to the nucleus. Its subcellular location is the cytoplasm. It localises to the perinuclear region. Functionally, component of the integrator complex, a multiprotein complex that terminates RNA polymerase II (Pol II) transcription in the promoter-proximal region of genes. The integrator complex provides a quality checkpoint during transcription elongation by driving premature transcription termination of transcripts that are unfavorably configured for transcriptional elongation: the complex terminates transcription by (1) catalyzing dephosphorylation of the C-terminal domain (CTD) of Pol II subunit Polr2A/Rbp1 and Spt5, and (2) degrading the exiting nascent RNA transcript via endonuclease activity. The integrator complex is also involved in the 3'-end processing of the U7 snRNA, and also the spliceosomal snRNAs U1, U2, U4 and U5. Plays a role as a regulator of spermatogenesis. Crucial regulator of the mitotic cell cycle and development. Required for the correct dynein-dynactin perinuclear localization important for nucleus-centrosome coupling that occur upon meiotic progression of primary spermatocytes. Plays a role in sperm motility and fertility. May have a role in the PNG/PLU/GNU pathway. The chain is Protein asunder from Drosophila melanogaster (Fruit fly).